We begin with the raw amino-acid sequence, 642 residues long: Threonine--tRNA ligase (642 aa).

The region spanning 1-63 (MSEIVVTLPD…TDDCELVIVT (63 aa)) is the TGS domain. Residues 242 to 533 (DHRKLGQELD…LIEHFDGNFP (292 aa)) are catalytic. The Zn(2+) site is built by C334, H385, and H510.

It belongs to the class-II aminoacyl-tRNA synthetase family. In terms of assembly, homodimer. The cofactor is Zn(2+).

It localises to the cytoplasm. It catalyses the reaction tRNA(Thr) + L-threonine + ATP = L-threonyl-tRNA(Thr) + AMP + diphosphate + H(+). Catalyzes the attachment of threonine to tRNA(Thr) in a two-step reaction: L-threonine is first activated by ATP to form Thr-AMP and then transferred to the acceptor end of tRNA(Thr). This Natronomonas pharaonis (strain ATCC 35678 / DSM 2160 / CIP 103997 / JCM 8858 / NBRC 14720 / NCIMB 2260 / Gabara) (Halobacterium pharaonis) protein is Threonine--tRNA ligase.